A 260-amino-acid chain; its full sequence is uncharacterized protein (260 aa).

The first 22 residues, 1–22 (MGNIKSFALYISILLLIVVVAG), serve as a signal peptide directing secretion. Cys23 carries N-palmitoyl cysteine lipidation. The S-diacylglycerol cysteine moiety is linked to residue Cys23.

This sequence belongs to the staphylococcal tandem lipoprotein family.

Its subcellular location is the cell membrane. This is an uncharacterized protein from Staphylococcus aureus (strain MRSA252).